We begin with the raw amino-acid sequence, 473 residues long: Digalactosyldiacylglycerol synthase 2, chloroplastic (473 aa).

2 interaction with the membrane lipid bilayer regions span residues 130-148 (LTWF…YVIG) and 227-245 (QPFT…SKGY).

It belongs to the glycosyltransferase group 1 family. Glycosyltransferase 4 subfamily. In terms of tissue distribution, expressed in leaves, flowers and roots, but not in stems and siliques.

It is found in the plastid. The protein localises to the chloroplast outer membrane. It catalyses the reaction a 1,2-diacyl-3-O-(beta-D-galactosyl)-sn-glycerol + UDP-alpha-D-galactose = a 1,2-diacyl-3-O-[alpha-D-galactosyl-(1-&gt;6)-beta-D-galactosyl]-sn-glycerol + UDP + H(+). Its activity is regulated as follows. Stimulated by anionic phospholipids. Functionally, involved in the synthesis of diacylglycerol galactolipids that are specifically found in thylakoid membranes. Specific for alpha-glycosidic linkages. During phosphate shortage, involved in the biosynthesis of digalactosyldiacylglycerol (DGDG) which rescues the limitation of phospholipids. The polypeptide is Digalactosyldiacylglycerol synthase 2, chloroplastic (Arabidopsis thaliana (Mouse-ear cress)).